A 380-amino-acid polypeptide reads, in one-letter code: MRCLLLWMVVLAARAAPARSLVYRGEAVGLRADGPVAFAVHPTDATLALRGRLIFLEHQLPAGRRYNGTVELLRYHAAGDCFVMLQTTAFASCPRVANNAFRSCLHADTRPARSERRASAAVENHVLFSIARPRPIDSGLYFLRVGIYGGTAGSERRRDVFPLAAFVHSFGEPGDPEAAARTPAPSRQSRPAASGLTSSASLYDRALARSPQAPPPRPAPPRAARAGPRRPERVDETTEVEAATRAGSAFALTTPPAGPTASPAASPSRAFSAAAPAAAAQPAGDTPARFRRQLASILVPLCVLVLLLLALCAATVNCALRRRLLPCSRRVYKPRTCAACGSGTCAGRPPCRGAAPSAPATVVALGSRPKAPPLATISEE.

Residues 1–20 form the signal peptide; sequence MRCLLLWMVVLAARAAPARS. Residues 21–293 lie on the Virion surface side of the membrane; it reads LVYRGEAVGL…GDTPARFRRQ (273 aa). Residue asparagine 67 is glycosylated (N-linked (GlcNAc...) asparagine; by host). Positions 172–269 are disordered; it reads EPGDPEAAAR…TASPAASPSR (98 aa). Over residues 185–201 the composition is skewed to polar residues; the sequence is PSRQSRPAASGLTSSAS. Residues 212-221 show a composition bias toward pro residues; sequence QAPPPRPAPP. Over residues 249–269 the composition is skewed to low complexity; sequence AFALTTPPAGPTASPAASPSR. A helical transmembrane segment spans residues 294–314; that stretch reads LASILVPLCVLVLLLLALCAA. The Intravirion segment spans residues 315–380; the sequence is TVNCALRRRL…APPLATISEE (66 aa).

The protein belongs to the alphaherpesvirinae glycoprotein I family. Interacts with gE.

The protein localises to the virion membrane. It is found in the host cell membrane. It localises to the host cell junction. The protein resides in the host Golgi apparatus membrane. In terms of biological role, in epithelial cells, the heterodimer gE/gI is required for the cell-to-cell spread of the virus, by sorting nascent virions to cell junctions. Once the virus reaches the cell junctions, virus particles can spread to adjacent cells extremely rapidly through interactions with cellular receptors that accumulate at these junctions. Implicated in basolateral spread in polarized cells. In neuronal cells, gE/gI is essential for the anterograde spread of the infection throughout the host nervous system. Together with US9, the heterodimer gE/gI is involved in the sorting and transport of viral structural components toward axon tips. This chain is Envelope glycoprotein I (gI), found in Bos taurus (Bovine).